Consider the following 360-residue polypeptide: Histidinol-phosphate aminotransferase (360 aa).

K221 bears the N6-(pyridoxal phosphate)lysine mark.

Belongs to the class-II pyridoxal-phosphate-dependent aminotransferase family. Histidinol-phosphate aminotransferase subfamily. In terms of assembly, homodimer. Pyridoxal 5'-phosphate is required as a cofactor.

It carries out the reaction L-histidinol phosphate + 2-oxoglutarate = 3-(imidazol-4-yl)-2-oxopropyl phosphate + L-glutamate. It functions in the pathway amino-acid biosynthesis; L-histidine biosynthesis; L-histidine from 5-phospho-alpha-D-ribose 1-diphosphate: step 7/9. This chain is Histidinol-phosphate aminotransferase, found in Desulfitobacterium hafniense (strain DSM 10664 / DCB-2).